The following is a 477-amino-acid chain: Bifunctional protein HldE (477 aa).

Positions 1 to 318 are ribokinase; it reads MKVTLPEFER…ENAVRGRADT (318 aa). Position 179 is an N6-acetyllysine (Lys179). Residue 195 to 198 coordinates ATP; it reads NLSE. Asp264 is a catalytic residue. The tract at residues 344 to 477 is cytidylyltransferase; sequence MTNGVFDILH…IKKIQQDKKG (134 aa).

The protein in the N-terminal section; belongs to the carbohydrate kinase PfkB family. In the C-terminal section; belongs to the cytidylyltransferase family. As to quaternary structure, homodimer.

The catalysed reaction is D-glycero-beta-D-manno-heptose 7-phosphate + ATP = D-glycero-beta-D-manno-heptose 1,7-bisphosphate + ADP + H(+). It catalyses the reaction D-glycero-beta-D-manno-heptose 1-phosphate + ATP + H(+) = ADP-D-glycero-beta-D-manno-heptose + diphosphate. It participates in nucleotide-sugar biosynthesis; ADP-L-glycero-beta-D-manno-heptose biosynthesis; ADP-L-glycero-beta-D-manno-heptose from D-glycero-beta-D-manno-heptose 7-phosphate: step 1/4. It functions in the pathway nucleotide-sugar biosynthesis; ADP-L-glycero-beta-D-manno-heptose biosynthesis; ADP-L-glycero-beta-D-manno-heptose from D-glycero-beta-D-manno-heptose 7-phosphate: step 3/4. Catalyzes the phosphorylation of D-glycero-D-manno-heptose 7-phosphate at the C-1 position to selectively form D-glycero-beta-D-manno-heptose-1,7-bisphosphate. In terms of biological role, catalyzes the ADP transfer from ATP to D-glycero-beta-D-manno-heptose 1-phosphate, yielding ADP-D-glycero-beta-D-manno-heptose. This is Bifunctional protein HldE from Escherichia coli (strain 55989 / EAEC).